Consider the following 423-residue polypeptide: Core protease OPG082 (423 aa).

Active-site residues include His241, Asp248, and Cys328.

Belongs to the peptidase C57 family.

The protein localises to the virion. In terms of biological role, late protein responsible for processing most or all of the viral core and membrane proteins known to undergo morphogenesis-associated proteolysis. These proteolytic events are involved in the transformation of immature virions (IV) into mature virions (MV). Probably cleaves at least the OPG129, OPG136, OPG098, and OPG144 precursors preferentially at Ala-Gly-|-Ala motifs. Also seems to process Ala-Gly-|-Ser and Ala-Gly-|-Thr motifs. The protein is Core protease OPG082 (OPG083) of Homo sapiens (Human).